A 303-amino-acid polypeptide reads, in one-letter code: Coenzyme PQQ synthesis protein B (303 aa).

Belongs to the PqqB family.

The protein operates within cofactor biosynthesis; pyrroloquinoline quinone biosynthesis. Functionally, may be involved in the transport of PQQ or its precursor to the periplasm. The polypeptide is Coenzyme PQQ synthesis protein B (Pseudomonas fluorescens (strain SBW25)).